The sequence spans 137 residues: Large ribosomal subunit protein uL16c (137 aa).

It belongs to the universal ribosomal protein uL16 family. As to quaternary structure, part of the 50S ribosomal subunit.

The protein localises to the plastid. The protein resides in the chloroplast. The protein is Large ribosomal subunit protein uL16c of Adiantum capillus-veneris (Maidenhair fern).